A 130-amino-acid polypeptide reads, in one-letter code: Small ribosomal subunit protein uS9 (130 aa).

It belongs to the universal ribosomal protein uS9 family.

This Shewanella pealeana (strain ATCC 700345 / ANG-SQ1) protein is Small ribosomal subunit protein uS9.